A 248-amino-acid chain; its full sequence is MGNKINPNGFRLGITKGWNSRWYAGKKQYSQLLKEDEKIRKLVSQKLAAAGIARIEIERAGQQVNVIISAAKPGIVIGKGGESIKQLRGEIERLVSAGTVAVNVAEIPNPNISAPLVALRIAEQIERRFAFRRAMKQAAQRVMESGARGVKVILSGRLGGAEQARTEKVLEGRVPLHTLRADIDYGTARAETTYGSLGIKVLVFNGEVIGGKTETLARPPRKSDERRREDGERPSRRRPTARRRPGGE.

Residues Ile39–Pro108 form the KH type-2 domain. Positions Lys212–Glu248 are disordered. The span at Arg221–Pro234 shows a compositional bias: basic and acidic residues. Residues Ser235–Glu248 are compositionally biased toward basic residues.

The protein belongs to the universal ribosomal protein uS3 family. Part of the 30S ribosomal subunit. Forms a tight complex with proteins S10 and S14.

Functionally, binds the lower part of the 30S subunit head. Binds mRNA in the 70S ribosome, positioning it for translation. The polypeptide is Small ribosomal subunit protein uS3 (Deinococcus geothermalis (strain DSM 11300 / CIP 105573 / AG-3a)).